The chain runs to 303 residues: Probable 5-dehydro-4-deoxyglucarate dehydratase (303 aa).

The protein belongs to the DapA family.

It catalyses the reaction 5-dehydro-4-deoxy-D-glucarate + H(+) = 2,5-dioxopentanoate + CO2 + H2O. Its pathway is carbohydrate acid metabolism; D-glucarate degradation; 2,5-dioxopentanoate from D-glucarate: step 2/2. The sequence is that of Probable 5-dehydro-4-deoxyglucarate dehydratase from Acinetobacter baumannii (strain SDF).